Here is a 242-residue protein sequence, read N- to C-terminus: Ubiquinone/menaquinone biosynthesis C-methyltransferase UbiE (242 aa).

S-adenosyl-L-methionine contacts are provided by residues Thr69, Asp87, and 114–115 (NA).

The protein belongs to the class I-like SAM-binding methyltransferase superfamily. MenG/UbiE family.

The catalysed reaction is a 2-demethylmenaquinol + S-adenosyl-L-methionine = a menaquinol + S-adenosyl-L-homocysteine + H(+). It catalyses the reaction a 2-methoxy-6-(all-trans-polyprenyl)benzene-1,4-diol + S-adenosyl-L-methionine = a 5-methoxy-2-methyl-3-(all-trans-polyprenyl)benzene-1,4-diol + S-adenosyl-L-homocysteine + H(+). It participates in quinol/quinone metabolism; menaquinone biosynthesis; menaquinol from 1,4-dihydroxy-2-naphthoate: step 2/2. It functions in the pathway cofactor biosynthesis; ubiquinone biosynthesis. Its function is as follows. Methyltransferase required for the conversion of demethylmenaquinol (DMKH2) to menaquinol (MKH2) and the conversion of 2-polyprenyl-6-methoxy-1,4-benzoquinol (DDMQH2) to 2-polyprenyl-3-methyl-6-methoxy-1,4-benzoquinol (DMQH2). The chain is Ubiquinone/menaquinone biosynthesis C-methyltransferase UbiE from Zymomonas mobilis subsp. mobilis (strain ATCC 31821 / ZM4 / CP4).